The following is a 557-amino-acid chain: Formate--tetrahydrofolate ligase (557 aa).

65–72 is an ATP binding site; that stretch reads TPAGEGKT.

It belongs to the formate--tetrahydrofolate ligase family. As to quaternary structure, homotetramer.

The catalysed reaction is (6S)-5,6,7,8-tetrahydrofolate + formate + ATP = (6R)-10-formyltetrahydrofolate + ADP + phosphate. Its pathway is one-carbon metabolism; tetrahydrofolate interconversion. The sequence is that of Formate--tetrahydrofolate ligase (fhs) from Methylorubrum extorquens (strain ATCC 14718 / DSM 1338 / JCM 2805 / NCIMB 9133 / AM1) (Methylobacterium extorquens).